The sequence spans 230 residues: Small ribosomal subunit protein uS3c (230 aa).

The 71-residue stretch at 39-109 (IRSFIHSKLS…QLRVNVVEIA (71 aa)) folds into the KH type-2 domain.

This sequence belongs to the universal ribosomal protein uS3 family. Part of the 30S ribosomal subunit.

It is found in the plastid. The protein resides in the chloroplast. This Pyropia yezoensis (Susabi-nori) protein is Small ribosomal subunit protein uS3c (rps3).